Consider the following 425-residue polypeptide: UPF0597 protein VFMJ11_0655 (425 aa).

It belongs to the UPF0597 family.

In Aliivibrio fischeri (strain MJ11) (Vibrio fischeri), this protein is UPF0597 protein VFMJ11_0655.